The primary structure comprises 105 residues: uncharacterized protein (105 aa).

A helical membrane pass occupies residues 29 to 49 (NAFLLILSEAYLLFVFLSYLI).

The protein localises to the membrane. This is an uncharacterized protein from Saccharomyces cerevisiae (strain ATCC 204508 / S288c) (Baker's yeast).